The primary structure comprises 570 residues: ATP-dependent RNA helicase ROK1 (570 aa).

Over residues 69 to 78 the composition is skewed to basic and acidic residues; that stretch reads ETHAEDKEDK. A disordered region spans residues 69–96; that stretch reads ETHAEDKEDKDNDNEEDEIKEEESLQYQ. Acidic residues predominate over residues 79 to 89; it reads DNDNEEDEIKE. Residues 131 to 159 carry the Q motif motif; that stretch reads DLITRFSFDKRLLNNLILNHFTEPTPIQC. In terms of domain architecture, Helicase ATP-binding spans 162-342; sequence IPLALNNRDM…KSIMMDPVRV (181 aa). 175–182 serves as a coordination point for ATP; that stretch reads APTGSGKT. The DEAD box signature appears at 289–292; the sequence is DEAD. One can recognise a Helicase C-terminal domain in the interval 353–515; that stretch reads SIEQKLVFCG…EISEWMEKVS (163 aa).

The protein belongs to the DEAD box helicase family. DDX52/ROK1 subfamily. In terms of assembly, interacts with the U3 snoRNA and is associated with the 90S and 40S pre-ribosomes.

Its subcellular location is the nucleus. It is found in the nucleolus. The catalysed reaction is ATP + H2O = ADP + phosphate + H(+). Its function is as follows. ATP-dependent RNA helicase involved in 40S ribosomal subunit biogenesis. Required for the processing and cleavage of 35S pre-rRNA at sites A0, A1, and A2, leading to mature 18S rRNA. The polypeptide is ATP-dependent RNA helicase ROK1 (ROK1) (Vanderwaltozyma polyspora (strain ATCC 22028 / DSM 70294 / BCRC 21397 / CBS 2163 / NBRC 10782 / NRRL Y-8283 / UCD 57-17) (Kluyveromyces polysporus)).